Reading from the N-terminus, the 131-residue chain is Class I hydrophobin POH2 (131 aa).

An N-terminal signal peptide occupies residues 1 to 21 (MFFRTSSLFTTIVAFTVMAAA). 4 cysteine pairs are disulfide-bonded: Cys50/Cys110, Cys57/Cys104, Cys58/Cys91, and Cys111/Cys124. N-linked (GlcNAc...) asparagine glycosylation is found at Asn115 and Asn128.

This sequence belongs to the fungal hydrophobin family. As to quaternary structure, self-assembles to form functional amyloid fibrils called rodlets. Self-assembly into fibrillar rodlets occurs spontaneously at hydrophobic:hydrophilic interfaces and the rodlets further associate laterally to form amphipathic monolayers. As to expression, expressionn is switched off in the fruiting bodies but abundantly expressed in the vegetative mycelium of both monokaryon and dikaryon.

It localises to the secreted. The protein resides in the cell wall. In terms of biological role, aerial growth, conidiation, and dispersal of filamentous fungi in the environment rely upon a capability of their secreting small amphipathic proteins called hydrophobins (HPBs) with low sequence identity. Class I can self-assemble into an outermost layer of rodlet bundles on aerial cell surfaces, conferring cellular hydrophobicity that supports fungal growth, development and dispersal; whereas Class II form highly ordered films at water-air interfaces through intermolecular interactions but contribute nothing to the rodlet structure. POH2 is a class I hydrophobin that causes a large drop in the water-surface tension, enabling hyphae to breach the interface and grow into the air, in both the primary and the secondary mycelium. In the latter mycelium POH2 maight also play a role in the emergence of fruiting bodies. Secreted POH2 could also play a role in facilitating lignin degradation. The polypeptide is Class I hydrophobin POH2 (Pleurotus ostreatus (Oyster mushroom)).